Here is a 510-residue protein sequence, read N- to C-terminus: Pentatricopeptide repeat-containing protein At1g71060, mitochondrial (510 aa).

The transit peptide at 1–14 (MVFSRFFRVTGVNL) directs the protein to the mitochondrion. PPR repeat units lie at residues 127–157 (TTSN…MKAK), 161–195 (SKET…GFKM), 196–230 (ESSD…RFEP), 231–265 (DIKS…GFEP), 266–300 (DVVA…NCKP), 301–335 (SPHI…GFPL), 336–370 (EAPT…GVGP), 371–401 (NART…MSCE), 403–437 (TVST…GVLP), and 438–472 (GMHM…GIRP).

Belongs to the PPR family. P subfamily.

The protein localises to the mitochondrion. In Arabidopsis thaliana (Mouse-ear cress), this protein is Pentatricopeptide repeat-containing protein At1g71060, mitochondrial.